A 232-amino-acid polypeptide reads, in one-letter code: NAD(P)H-quinone oxidoreductase subunit K 1 (232 aa).

4 residues coordinate [4Fe-4S] cluster: Cys49, Cys50, Cys114, and Cys145.

This sequence belongs to the complex I 20 kDa subunit family. As to quaternary structure, NDH-1 can be composed of about 15 different subunits; different subcomplexes with different compositions have been identified which probably have different functions. [4Fe-4S] cluster is required as a cofactor.

The protein resides in the cell inner membrane. It catalyses the reaction a plastoquinone + NADH + (n+1) H(+)(in) = a plastoquinol + NAD(+) + n H(+)(out). The catalysed reaction is a plastoquinone + NADPH + (n+1) H(+)(in) = a plastoquinol + NADP(+) + n H(+)(out). NDH-1 shuttles electrons from an unknown electron donor, via FMN and iron-sulfur (Fe-S) centers, to quinones in the respiratory and/or the photosynthetic chain. The immediate electron acceptor for the enzyme in this species is believed to be plastoquinone. Couples the redox reaction to proton translocation, and thus conserves the redox energy in a proton gradient. Cyanobacterial NDH-1 also plays a role in inorganic carbon-concentration. This Gloeobacter violaceus (strain ATCC 29082 / PCC 7421) protein is NAD(P)H-quinone oxidoreductase subunit K 1.